The chain runs to 515 residues: Gamma aminobutyrate transaminase 1, mitochondrial (515 aa).

The transit peptide at 1-57 directs the protein to the mitochondrion; sequence MAKISRLFGSTVKAAITAQAGFHGKRIPAVSSLQEHIVKSTPARYNSTQACLENDIS. 172 to 173 serves as a coordination point for pyridoxal 5'-phosphate; sequence GS. A substrate-binding site is contributed by tyrosine 205. Aspartate 312 contacts pyridoxal 5'-phosphate. Residue lysine 341 participates in substrate binding. An N6-(pyridoxal phosphate)lysine modification is found at lysine 341.

It belongs to the class-III pyridoxal-phosphate-dependent aminotransferase family. As to expression, expressed in leaves, roots, stems, flowers and fruits.

The protein localises to the mitochondrion. The catalysed reaction is 4-aminobutanoate + pyruvate = succinate semialdehyde + L-alanine. The enzyme catalyses 4-aminobutanoate + glyoxylate = succinate semialdehyde + glycine. Its function is as follows. Transaminase that degrades gamma-amino butyric acid (GABA) and uses pyruvate or glyoxylate as amino-group acceptor. Cannot use beta-alanine, ornithine, acetylornithine, serine, glycine, asparagine, glutamine, glutamate, valine, leucine, isoleucine, methionine, phenylalanine, histidine, lysine, arginine, aspartate, threonine, tyrosine, tryptophan, proline, or cysteine as amino donors. Acts predominantly in vegetative tissues. The polypeptide is Gamma aminobutyrate transaminase 1, mitochondrial (GABA-TP1) (Solanum lycopersicum (Tomato)).